Reading from the N-terminus, the 189-residue chain is Fine tangled pili major subunit (189 aa).

This sequence belongs to the Dps family. As to quaternary structure, hexamer.

The protein resides in the fimbrium. Its function is as follows. May contribute to bacterial adherence, or be involved in the protection of the bacteria, or both. This is Fine tangled pili major subunit (ftpA) from Haemophilus ducreyi (strain 35000HP / ATCC 700724).